A 732-amino-acid polypeptide reads, in one-letter code: Integrator complex subunit 13 (732 aa).

The segment covering 564–648 (PPEEEERKKR…DETPHMEKSK (85 aa)) has biased composition (basic and acidic residues). The segment at 564–650 (PPEEEERKKR…TPHMEKSKGP (87 aa)) is disordered. Residues 572-582 (KRGRKREDRED) carry the Nuclear localization signal (NLS) motif. Residue Lys-611 forms a Glycyl lysine isopeptide (Lys-Gly) (interchain with G-Cter in SUMO2) linkage. Ser-623, Ser-626, and Ser-678 each carry phosphoserine. A cleavage module binding motif (CMBM) region spans residues 649–694 (GPVSLLSLWSNRINTANSRKHQEFAGRLNSVNNRAELYQHLKEENG).

It belongs to the Integrator subunit 13 family. In terms of assembly, component of the Integrator complex, composed of core subunits INTS1, INTS2, INTS3, INTS4, INTS5, INTS6, INTS7, INTS8, INTS9/RC74, INTS10, INTS11/CPSF3L, INTS12, INTS13, INTS14 and INTS15. The core complex associates with protein phosphatase 2A subunits PPP2CA and PPP2R1A, to form the Integrator-PP2A (INTAC) complex. INTS13 is part of the tail subcomplex, composed of INTS10, INTS13, INTS14 and INTS15. Interacts with transcription factors ZNF609 and ZNF655. Interacts with PAFAH1B1; this interaction may be required for proper recruitment of dynein complexes to the nuclear envelope at prophase.

It is found in the nucleus. Its subcellular location is the cytoplasm. Functionally, component of the integrator complex, a multiprotein complex that terminates RNA polymerase II (Pol II) transcription in the promoter-proximal region of genes. The integrator complex provides a quality checkpoint during transcription elongation by driving premature transcription termination of transcripts that are unfavorably configured for transcriptional elongation: the complex terminates transcription by (1) catalyzing dephosphorylation of the C-terminal domain (CTD) of Pol II subunit POLR2A/RPB1 and SUPT5H/SPT5, (2) degrading the exiting nascent RNA transcript via endonuclease activity and (3) promoting the release of Pol II from bound DNA. The integrator complex is also involved in terminating the synthesis of non-coding Pol II transcripts, such as enhancer RNAs (eRNAs), small nuclear RNAs (snRNAs), telomerase RNAs and long non-coding RNAs (lncRNAs). Within the integrator complex, INTS13 is part of the integrator tail module and acts as a platform for the recruitment of transcription factors at promoters. At prophase, mediates recruitment of cytoplasmic dynein to the nuclear envelope, a step important for proper centrosome-nucleus coupling. At G2/M phase, may be required for proper spindle formation and execution of cytokinesis. The chain is Integrator complex subunit 13 from Mus musculus (Mouse).